A 462-amino-acid polypeptide reads, in one-letter code: tRNA modification GTPase MnmE (462 aa).

3 residues coordinate (6S)-5-formyl-5,6,7,8-tetrahydrofolate: Arg-34, Glu-92, and Lys-131. Positions 227–386 constitute a TrmE-type G domain; the sequence is GLQVVIAGKP…LIDAITAHAG (160 aa). Asn-237 is a binding site for K(+). GTP contacts are provided by residues 237–242, 256–262, and 281–284; these read NAGKSS, TDIAGTT, and DTAG. Ser-241 contacts Mg(2+). Residues Thr-256, Ile-258, and Thr-261 each coordinate K(+). Thr-262 serves as a coordination point for Mg(2+). Lys-462 lines the (6S)-5-formyl-5,6,7,8-tetrahydrofolate pocket.

It belongs to the TRAFAC class TrmE-Era-EngA-EngB-Septin-like GTPase superfamily. TrmE GTPase family. Homodimer. Heterotetramer of two MnmE and two MnmG subunits. K(+) serves as cofactor.

Its subcellular location is the cytoplasm. In terms of biological role, exhibits a very high intrinsic GTPase hydrolysis rate. Involved in the addition of a carboxymethylaminomethyl (cmnm) group at the wobble position (U34) of certain tRNAs, forming tRNA-cmnm(5)s(2)U34. In Acinetobacter baylyi (strain ATCC 33305 / BD413 / ADP1), this protein is tRNA modification GTPase MnmE.